The following is a 473-amino-acid chain: MAP kinase-activated protein kinase 5 (473 aa).

The region spanning 22-304 (INWTQKLGAG…IEGVLDHPWL (283 aa)) is the Protein kinase domain. ATP is bound by residues 28–36 (LGAGISGPV) and K51. S115 carries the phosphoserine; by PKA modification. The active-site Proton acceptor is the D148. T182 carries the phosphothreonine; by MAPK11, MAPK14, MAPK4, MAPK6 and PKA modification. Residues S212 and S354 each carry the phosphoserine modification. Positions 409–440 (ENEDEKLNEVMQEAWKYNRECKLLRDALQSFS) form a coiled coil.

This sequence belongs to the protein kinase superfamily. CAMK Ser/Thr protein kinase family. Interacts with SQSTM1. Interacts with ERK3/MAPK6 and ERK4/MAPK4 (via FRIEDE motif); the interaction is direct. Interacts with YWHAE; the interaction prevents phosphorylation of HSP27/HSPB1 leading to disrupt F-actin polymerization. Phosphorylated on Thr-182 ERK3/MAPK6 or ERK4/MAPK4; which is the regulatory phosphorylation site and is located on the T-loop/loop 12, leading to activation. Phosphorylation at Thr-182 by p38-alpha/MAPK14, p38-beta/MAPK11 is subject to debate. Phosphorylated at Ser-115 by PKA/PRKACA, leading to localization to the cytoplasm. Autophosphorylated. As to expression, expressed ubiquitously.

It localises to the cytoplasm. Its subcellular location is the nucleus. The enzyme catalyses L-seryl-[protein] + ATP = O-phospho-L-seryl-[protein] + ADP + H(+). It catalyses the reaction L-threonyl-[protein] + ATP = O-phospho-L-threonyl-[protein] + ADP + H(+). Its activity is regulated as follows. Activated following phosphorylation at Thr-182 by p38-alpha/MAPK14, p38-beta/MAPK11, ERK2/MAPK1, ERK3/MAPK6, and ERK4/MAPK4. Activated by stress-related extracellular stimuli; such as H(2)O(2), arsenite, anisomycin TNF alpha and also PMA and the calcium ionophore A23187; but to a lesser extent. In vitro, activated by SQSTM1. Inhibited by diterpenoid alkaloid noroxoaconitine. Its function is as follows. Tumor suppressor serine/threonine-protein kinase involved in mTORC1 signaling and post-transcriptional regulation. Phosphorylates FOXO3, ERK3/MAPK6, ERK4/MAPK4, HSP27/HSPB1, p53/TP53 and RHEB. Acts as a tumor suppressor by mediating Ras-induced senescence and phosphorylating p53/TP53. Involved in post-transcriptional regulation of MYC by mediating phosphorylation of FOXO3: phosphorylation of FOXO3 leads to promote nuclear localization of FOXO3, enabling expression of miR-34b and miR-34c, 2 post-transcriptional regulators of MYC that bind to the 3'UTR of MYC transcript and prevent MYC translation. Acts as a negative regulator of mTORC1 signaling by mediating phosphorylation and inhibition of RHEB. Part of the atypical MAPK signaling via its interaction with ERK3/MAPK6 or ERK4/MAPK4: the precise role of the complex formed with ERK3/MAPK6 or ERK4/MAPK4 is still unclear, but the complex follows a complex set of phosphorylation events: upon interaction with atypical MAPK (ERK3/MAPK6 or ERK4/MAPK4), ERK3/MAPK6 (or ERK4/MAPK4) is phosphorylated and then mediates phosphorylation and activation of MAPKAPK5, which in turn phosphorylates ERK3/MAPK6 (or ERK4/MAPK4). Mediates phosphorylation of HSP27/HSPB1 in response to PKA/PRKACA stimulation, inducing F-actin rearrangement. The sequence is that of MAP kinase-activated protein kinase 5 (Mapkapk5) from Mus musculus (Mouse).